We begin with the raw amino-acid sequence, 821 residues long: Maternal DNA replication licensing factor mcm6 (821 aa).

Residues 159–186 form a C4-type zinc finger; the sequence is CMDCQSVVKDVEQQFRYTQPTICKNPVC. The 208-residue stretch at 347-554 folds into the MCM domain; the sequence is LYHNLCTSLF…TDYAIARRIV (208 aa). 397-404 contributes to the ATP binding site; that stretch reads GDPSTSKS. The Arginine finger motif lies at 529–532; the sequence is SRFD.

It belongs to the MCM family. As to quaternary structure, component of the mcm2-7 complex (RLF-M). The complex forms a toroidal hexameric ring with the proposed subunit order mcm2-mcm6-mcm4-mcm7-mcm3-mcm5. The heterodimer of mmcm3/mcm5 interacts with mcm4, mmcm6, mcm7 and weakly with mcm2. Component of the CMG helicase complex, composed of the mcm2-7 complex, the GINS complex and cdc45.

The protein localises to the nucleus. It localises to the chromosome. The catalysed reaction is ATP + H2O = ADP + phosphate + H(+). In terms of biological role, acts as a component of the mcm2-7 complex (mcm complex) which is the putative replicative helicase essential for 'once per cell cycle' DNA replication initiation and elongation in eukaryotic cells. The active ATPase sites in the mcm2-7 ring are formed through the interaction surfaces of two neighboring subunits such that a critical structure of a conserved arginine finger motif is provided in trans relative to the ATP-binding site of the Walker A box of the adjacent subunit. The six ATPase active sites, however, are likely to contribute differentially to the complex helicase activity. The existence of maternal and zygotic forms of mcm3 and mcm6 suggests that specific forms of mcm2-7 complexes may be used during different stages of development. This is Maternal DNA replication licensing factor mcm6 from Xenopus tropicalis (Western clawed frog).